Reading from the N-terminus, the 266-residue chain is Outer kinetochore KNL1 complex subunit ZWINT (266 aa).

The tract at residues 95–115 is disordered; sequence DQNPDALASEDTSRQKATETK. Over residues 105–115 the composition is skewed to basic and acidic residues; it reads DTSRQKATETK. Residues 136–237 adopt a coiled-coil conformation; that stretch reads LSEALPQVKE…QRNQSYLQLL (102 aa). 2 positions are modified to phosphoserine: S232 and S265.

Component of the KNL1 complex composed of KNL1 and ZWINT. Part of the ten-subunit outer kinetochore KMN network that includes the KNL1, MIS12 and NDC80 complexes; a bioriented kinetochore contains approximately 150 copies of the network. Interacts with the MIS12 complex subunits MIS12 DSN1, and PMF1. Interacts with the NDC80 complex subunit NDC80 during mitosis. Interacts with ZW10. Interacts with CETN3. In terms of tissue distribution, expressed abundantly in brain and at lower levels in testis and kidney.

It localises to the nucleus. It is found in the chromosome. The protein resides in the centromere. The protein localises to the kinetochore. Its function is as follows. Acts as a component of the outer kinetochore KNL1 complex that serves as a docking point for spindle assembly checkpoint components and mediates microtubule-kinetochore interactions. Kinetochores, consisting of a centromere-associated inner segment and a microtubule-contacting outer segment, play a crucial role in chromosome segregation by mediating the physical connection between centromeric DNA and spindle microtubules. The outer kinetochore is made up of the ten-subunit KMN network, comprising the MIS12, NDC80 and KNL1 complexes, and auxiliary microtubule-associated components; together they connect the outer kinetochore with the inner kinetochore, bind microtubules, and mediate interactions with mitotic checkpoint proteins that delay anaphase until chromosomes are bioriented on the spindle. Targets the RZZ complex to the kinetochore at prometaphase. Recruits MAD2L1 to the kinetochore, but is not required for BUB1B localization. In addition to orienting mitotic chromosomes, it is also essential for alignment of homologous chromosomes during meiotic metaphase I. In meiosis I, required to activate the spindle assembly checkpoint at unattached kinetochores to correct erroneous kinetochore-microtubule attachments. In Rattus norvegicus (Rat), this protein is Outer kinetochore KNL1 complex subunit ZWINT (Zwint).